The primary structure comprises 856 residues: Envelope glycoprotein gp160 (856 aa).

An N-terminal signal peptide occupies residues methionine 1–glutamate 31. Residues asparagine 32–isoleucine 684 lie on the Extracellular side of the membrane. Cysteines 53 and 73 form a disulfide. N-linked (GlcNAc...) asparagine; by host glycosylation is found at asparagine 87, asparagine 132, asparagine 138, asparagine 152, asparagine 156, asparagine 183, and asparagine 198. 5 cysteine pairs are disulfide-bonded: cysteine 118-cysteine 206, cysteine 125-cysteine 197, cysteine 130-cysteine 153, cysteine 219-cysteine 248, and cysteine 229-cysteine 240. The interval cysteine 130–asparagine 152 is V1. A V2 region spans residues cysteine 153–cysteine 197. Residues asparagine 242, asparagine 263, asparagine 277, asparagine 294, asparagine 302, asparagine 332, asparagine 339, asparagine 355, and asparagine 364 are each glycosylated (N-linked (GlcNAc...) asparagine; by host). Positions cysteine 297–histidine 330 are V3. The cysteines at positions 297 and 331 are disulfide-linked. Residues serine 365–histidine 375 are CD4-binding loop. Cystine bridges form between cysteine 379/cysteine 445 and cysteine 386/cysteine 418. The segment at cysteine 386–cysteine 418 is V4. N-linked (GlcNAc...) asparagine; by host glycans are attached at residues asparagine 387, asparagine 393, asparagine 398, asparagine 402, asparagine 411, asparagine 448, asparagine 461, asparagine 462, and asparagine 465. V5 stretches follow at residues asparagine 461–glycine 471 and threonine 463–glycine 471. The segment at alanine 512–alanine 532 is fusion peptide. The segment at lysine 574–leucine 592 is immunosuppression. Cysteine 598 and cysteine 604 are oxidised to a cystine. N-linked (GlcNAc...) asparagine; by host glycosylation is found at asparagine 611, asparagine 616, and asparagine 637. The stretch at lysine 633–alanine 667 forms a coiled coil. The segment at alanine 662–lysine 683 is MPER; binding to GalCer. Residues phenylalanine 685 to isoleucine 705 traverse the membrane as a helical segment. Over asparagine 706–leucine 856 the chain is Cytoplasmic. The YXXL motif; contains endocytosis signal motif lies at tyrosine 712–leucine 715. Residues leucine 720 to arginine 742 are disordered. Over residues histidine 723 to arginine 742 the composition is skewed to basic and acidic residues. Cysteine 764 is lipidated: S-palmitoyl cysteine; by host. A Di-leucine internalization motif motif is present at residues leucine 855 to leucine 856.

Belongs to the HIV-1 env protein family. The mature envelope protein (Env) consists of a homotrimer of non-covalently associated gp120-gp41 heterodimers. The resulting complex protrudes from the virus surface as a spike. There seems to be as few as 10 spikes on the average virion. Interacts with host CD4, CCR5 and CXCR4. Gp120 also interacts with the C-type lectins CD209/DC-SIGN and CLEC4M/DC-SIGNR (collectively referred to as DC-SIGN(R)). Gp120 and gp41 interact with GalCer. Gp120 interacts with host ITGA4/ITGB7 complex; on CD4+ T-cells, this interaction results in rapid activation of integrin ITGAL/LFA-1, which facilitates efficient cell-to-cell spreading of HIV-1. Gp120 interacts with cell-associated heparan sulfate; this interaction increases virus infectivity on permissive cells and may be involved in infection of CD4- cells. In terms of assembly, the mature envelope protein (Env) consists of a homotrimer of non-covalently associated gp120-gp41 heterodimers. The resulting complex protrudes from the virus surface as a spike. There seems to be as few as 10 spikes on the average virion. Post-translationally, highly glycosylated by host. The high number of glycan on the protein is reffered to as 'glycan shield' because it contributes to hide protein sequence from adaptive immune system. Palmitoylation of the transmembrane protein and of Env polyprotein (prior to its proteolytic cleavage) is essential for their association with host cell membrane lipid rafts. Palmitoylation is therefore required for envelope trafficking to classical lipid rafts, but not for viral replication. In terms of processing, specific enzymatic cleavages in vivo yield mature proteins. Envelope glycoproteins are synthesized as an inactive precursor that is heavily N-glycosylated and processed likely by host cell furin in the Golgi to yield the mature SU and TM proteins. The cleavage site between SU and TM requires the minimal sequence [KR]-X-[KR]-R. About 2 of the 9 disulfide bonds of gp41 are reduced by P4HB/PDI, following binding to CD4 receptor.

The protein localises to the virion membrane. The protein resides in the host cell membrane. It localises to the host endosome membrane. In terms of biological role, oligomerizes in the host endoplasmic reticulum into predominantly trimers. In a second time, gp160 transits in the host Golgi, where glycosylation is completed. The precursor is then proteolytically cleaved in the trans-Golgi and thereby activated by cellular furin or furin-like proteases to produce gp120 and gp41. Its function is as follows. Attaches the virus to the host lymphoid cell by binding to the primary receptor CD4. This interaction induces a structural rearrangement creating a high affinity binding site for a chemokine coreceptor like CXCR4 and/or CCR5. Acts as a ligand for CD209/DC-SIGN and CLEC4M/DC-SIGNR, which are respectively found on dendritic cells (DCs), and on endothelial cells of liver sinusoids and lymph node sinuses. These interactions allow capture of viral particles at mucosal surfaces by these cells and subsequent transmission to permissive cells. HIV subverts the migration properties of dendritic cells to gain access to CD4+ T-cells in lymph nodes. Virus transmission to permissive T-cells occurs either in trans (without DCs infection, through viral capture and transmission), or in cis (following DCs productive infection, through the usual CD4-gp120 interaction), thereby inducing a robust infection. In trans infection, bound virions remain infectious over days and it is proposed that they are not degraded, but protected in non-lysosomal acidic organelles within the DCs close to the cell membrane thus contributing to the viral infectious potential during DCs' migration from the periphery to the lymphoid tissues. On arrival at lymphoid tissues, intact virions recycle back to DCs' cell surface allowing virus transmission to CD4+ T-cells. Functionally, acts as a class I viral fusion protein. Under the current model, the protein has at least 3 conformational states: pre-fusion native state, pre-hairpin intermediate state, and post-fusion hairpin state. During fusion of viral and target intracellular membranes, the coiled coil regions (heptad repeats) assume a trimer-of-hairpins structure, positioning the fusion peptide in close proximity to the C-terminal region of the ectodomain. The formation of this structure appears to drive apposition and subsequent fusion of viral and target cell membranes. Complete fusion occurs in host cell endosomes and is dynamin-dependent, however some lipid transfer might occur at the plasma membrane. The virus undergoes clathrin-dependent internalization long before endosomal fusion, thus minimizing the surface exposure of conserved viral epitopes during fusion and reducing the efficacy of inhibitors targeting these epitopes. Membranes fusion leads to delivery of the nucleocapsid into the cytoplasm. The protein is Envelope glycoprotein gp160 of Homo sapiens (Human).